The sequence spans 546 residues: 2-isopropylmalate synthase (546 aa).

The 264-residue stretch at 8 to 271 (ILIFDTTLRD…NSFFGRSSDS (264 aa)) folds into the Pyruvate carboxyltransferase domain. The Mn(2+) site is built by Asp-17, His-208, His-210, and Asn-244. A regulatory domain region spans residues 408–546 (QLSHVQVSCG…KNKVLSNPKK (139 aa)).

Belongs to the alpha-IPM synthase/homocitrate synthase family. LeuA type 1 subfamily. In terms of assembly, homodimer. Mn(2+) is required as a cofactor.

The protein resides in the cytoplasm. The catalysed reaction is 3-methyl-2-oxobutanoate + acetyl-CoA + H2O = (2S)-2-isopropylmalate + CoA + H(+). Its pathway is amino-acid biosynthesis; L-leucine biosynthesis; L-leucine from 3-methyl-2-oxobutanoate: step 1/4. Its function is as follows. Catalyzes the condensation of the acetyl group of acetyl-CoA with 3-methyl-2-oxobutanoate (2-ketoisovalerate) to form 3-carboxy-3-hydroxy-4-methylpentanoate (2-isopropylmalate). This chain is 2-isopropylmalate synthase, found in Prochlorococcus marinus subsp. pastoris (strain CCMP1986 / NIES-2087 / MED4).